A 1318-amino-acid polypeptide reads, in one-letter code: Tetratricopeptide repeat protein 41 (1318 aa).

TPR repeat units follow at residues 401-434 (PRLE…KPCI), 653-686 (WIQE…PVRE), 819-852 (GRII…LLQS), 860-893 (LRAQ…LLRF), 993-1029 (MEFL…KEKA), and 1047-1084 (SDTL…RAAH). The interval 1295–1318 (KPGFPRRSQIESKLLKTSDDPNKE) is disordered. Residues 1302–1318 (SQIESKLLKTSDDPNKE) are compositionally biased toward basic and acidic residues.

Highly expressed in lung and myeloid leukemia cell line (at protein level). Isoform 4: expressed in heart (at protein level).

The protein resides in the cytoplasm. This is Tetratricopeptide repeat protein 41 from Mus musculus (Mouse).